A 277-amino-acid chain; its full sequence is MEMO1 family protein CTN_0605 (277 aa).

The protein belongs to the MEMO1 family.

In Thermotoga neapolitana (strain ATCC 49049 / DSM 4359 / NBRC 107923 / NS-E), this protein is MEMO1 family protein CTN_0605.